A 1015-amino-acid chain; its full sequence is Protein HIRA (1015 aa).

WD repeat units lie at residues 11 to 53 and 68 to 107; these read HNGK…QEDD and NHLA…GPST. At serine 111 the chain carries Phosphoserine. WD repeat units lie at residues 129-168, 172-211, 220-263, 266-322, and 326-367; these read SHSG…EILA, GHSG…LETS, GGTT…TNMD, GHRK…PLVV, and LFDK…DPLS. The disordered stretch occupies residues 408–431; it reads QQQQQLDQKNATTRETSSASSVTG. A compositionally biased stretch (polar residues) spans 413 to 431; sequence LDQKNATTRETSSASSVTG. An interaction with ASF1A region spans residues 421 to 479; it reads RETSSASSVTGVVNGESLEDIRKNLLKKQVETRTADGRRRITPLCIAQLDTGDFSTAFF. Residues 421–727 form an interaction with CCNA1 region; that stretch reads RETSSASSVT…RLKCNREGKE (307 aa). The interval 439–475 is required for repression of histone gene transcription; it reads EDIRKNLLKKQVETRTADGRRRITPLCIAQLDTGDFS. Low complexity-rich tracts occupy residues 494 to 507 and 540 to 556; these read SSPS…LDSS and ATST…TTPS. Residues 494–558 are disordered; it reads SSPSGQQLLP…PSVLTTPSKI (65 aa). Serine 548 carries the post-translational modification Phosphoserine. Threonine 554 bears the Phosphothreonine mark. Serine 556 carries the phosphoserine modification. The residue at position 575 (threonine 575) is a Phosphothreonine. Phosphoserine occurs at positions 583, 608, 609, 610, 612, 659, and 673. 2 interaction with PAX3 regions span residues 593–737 and 738–826; these read KEQN…SRVL and TAAG…SQIL. An interaction with histone H2B region spans residues 594-824; it reads EQNLVKELRS…LSGSDMTVSQ (231 aa). Basic and acidic residues predominate over residues 603–617; the sequence is SRELESSSDSDEKVH. Residues 603–623 are disordered; it reads SRELESSSDSDEKVHLAKPSS. Residues 736–1015 form an interaction with histone H4 region; the sequence is VLTAAGSCDV…QEQLDILRDK (280 aa).

Belongs to the WD repeat HIR1 family. As to quaternary structure, interacts with CCNA1, HIRIP3 and NFU1/HIRIP5. Part of a complex which includes ASF1A, CABIN1, histone H3.3, histone H4 and UBN1. Interacts with histone H2B, histone H3-3B, PAX3 and PAX7. In terms of processing, sumoylated. Phosphorylated by CDK2/CCNA1 and CDK2/CCNE1 on Thr-554 in vitro. Also phosphorylated on Thr-554 in vivo. In terms of tissue distribution, expressed in cerebrum, cerebellum, heart, kidney, liver, lung and spleen.

It is found in the nucleus. The protein resides in the PML body. In terms of biological role, required for the periodic repression of histone gene transcription during the cell cycle. Cooperates with ASF1A to promote replication-independent chromatin assembly. Required for the formation of senescence-associated heterochromatin foci (SAHF) and efficient senescence-associated cell cycle exit. The chain is Protein HIRA (Hira) from Mus musculus (Mouse).